A 384-amino-acid chain; its full sequence is MYCIGLISGTSVDGIDAALIEISGTELDLKIDLISGKTYPYPPELRGKIIEICGGKPISIEELAQIDDAIAQSFAQAAIMVQNGHPHAQLIGSHGQTVFHRPPVLGEREIKLGYSLQLGRGSMIAHLTGIPTVSNFRAADIAAGGQAAPLVPKVDAYLLSHPTHHRCVQNIGGIGNVTYLPPNQKPNWEQAVRGWDTGPGNVLIDLAIQKLTNGQQTYDNNGQWAAQGTPCESLVRKWLEQEFFQQTPPKSTGRELFSPAYLEQCWQDAQPYHLSDSDWLATLTELTAASIAQSYQQFIKAPIDEILVCGGGSRNTYLKQRLANYLPNSQILTTDDLGISSDFKEAIAFGVLAYWRLVCGITGNLPQVTGAKQAMLLGDIDHPV.

Residue 9–16 (GTSVDGID) participates in ATP binding.

This sequence belongs to the anhydro-N-acetylmuramic acid kinase family.

The catalysed reaction is 1,6-anhydro-N-acetyl-beta-muramate + ATP + H2O = N-acetyl-D-muramate 6-phosphate + ADP + H(+). The protein operates within amino-sugar metabolism; 1,6-anhydro-N-acetylmuramate degradation. It functions in the pathway cell wall biogenesis; peptidoglycan recycling. Its function is as follows. Catalyzes the specific phosphorylation of 1,6-anhydro-N-acetylmuramic acid (anhMurNAc) with the simultaneous cleavage of the 1,6-anhydro ring, generating MurNAc-6-P. Is required for the utilization of anhMurNAc either imported from the medium or derived from its own cell wall murein, and thus plays a role in cell wall recycling. This Rippkaea orientalis (strain PCC 8801 / RF-1) (Cyanothece sp. (strain PCC 8801)) protein is Anhydro-N-acetylmuramic acid kinase.